A 79-amino-acid chain; its full sequence is UPF0154 protein Lm4b_01315 (79 aa).

The helical transmembrane segment at 2–22 (WIYILVGIICLLAGLAGGFFI) threads the bilayer. A compositionally biased stretch (polar residues) spans 57 to 66 (KINQMMSAMN). Positions 57-79 (KINQMMSAMNKQQEKEKPKKTKK) are disordered.

This sequence belongs to the UPF0154 family.

Its subcellular location is the cell membrane. In Listeria monocytogenes serotype 4b (strain CLIP80459), this protein is UPF0154 protein Lm4b_01315.